Consider the following 205-residue polypeptide: Large ribosomal subunit protein uL4 (205 aa).

Belongs to the universal ribosomal protein uL4 family. Part of the 50S ribosomal subunit.

In terms of biological role, one of the primary rRNA binding proteins, this protein initially binds near the 5'-end of the 23S rRNA. It is important during the early stages of 50S assembly. It makes multiple contacts with different domains of the 23S rRNA in the assembled 50S subunit and ribosome. Its function is as follows. Forms part of the polypeptide exit tunnel. This Roseobacter denitrificans (strain ATCC 33942 / OCh 114) (Erythrobacter sp. (strain OCh 114)) protein is Large ribosomal subunit protein uL4.